A 393-amino-acid chain; its full sequence is Tryptophan synthase beta chain (393 aa).

Lysine 86 is subject to N6-(pyridoxal phosphate)lysine.

The protein belongs to the TrpB family. In terms of assembly, tetramer of two alpha and two beta chains. Requires pyridoxal 5'-phosphate as cofactor.

The catalysed reaction is (1S,2R)-1-C-(indol-3-yl)glycerol 3-phosphate + L-serine = D-glyceraldehyde 3-phosphate + L-tryptophan + H2O. It functions in the pathway amino-acid biosynthesis; L-tryptophan biosynthesis; L-tryptophan from chorismate: step 5/5. In terms of biological role, the beta subunit is responsible for the synthesis of L-tryptophan from indole and L-serine. The sequence is that of Tryptophan synthase beta chain from Alteromonas mediterranea (strain DSM 17117 / CIP 110805 / LMG 28347 / Deep ecotype).